We begin with the raw amino-acid sequence, 252 residues long: Chitooligosaccharide deacetylase (252 aa).

Mg(2+) contacts are provided by H61 and H125.

The protein belongs to the YdjC deacetylase family. ChbG subfamily. As to quaternary structure, homodimer. Mg(2+) is required as a cofactor.

The protein resides in the cytoplasm. The catalysed reaction is N,N'-diacetylchitobiose + H2O = N-acetyl-beta-D-glucosaminyl-(1-&gt;4)-D-glucosamine + acetate. It carries out the reaction diacetylchitobiose-6'-phosphate + H2O = N'-monoacetylchitobiose-6'-phosphate + acetate. The protein operates within glycan degradation; chitin degradation. In terms of biological role, involved in the degradation of chitin. ChbG is essential for growth on the acetylated chitooligosaccharides chitobiose and chitotriose but is dispensable for growth on cellobiose and chitosan dimer, the deacetylated form of chitobiose. Deacetylation of chitobiose-6-P and chitotriose-6-P is necessary for both the activation of the chb promoter by the regulatory protein ChbR and the hydrolysis of phosphorylated beta-glucosides by the phospho-beta-glucosidase ChbF. Catalyzes the removal of only one acetyl group from chitobiose-6-P to yield monoacetylchitobiose-6-P, the inducer of ChbR and the substrate of ChbF. In Salmonella dublin (strain CT_02021853), this protein is Chitooligosaccharide deacetylase.